Consider the following 632-residue polypeptide: Putative ferric transport system permease protein FbpB 1 (632 aa).

15 consecutive transmembrane segments (helical) span residues 5–25, 37–57, 58–78, 93–113, 144–164, 178–198, 223–243, 270–290, 299–319, 330–350, 377–397, 436–456, 469–489, 490–510, and 547–567; these read SFNL…LPLL, LFLT…YKIS, MGYS…LSLA, LLCI…AIFV, LFLS…FALY, IFSI…VTLM, GFNG…FMIL, YQII…IVFI, PLVL…YIAG, LGSM…IWIG, IIGM…SIFY, IYAG…AYIV, FLTM…YILA, FNNA…SMVM, and CFIV…TSFV. The 206-residue stretch at 140–345 folds into the ABC transmembrane type-1 1 domain; sequence ITNSLFLSGF…IFSLAIFIIQ (206 aa). The region spanning 431-632 is the ABC transmembrane type-1 2 domain; the sequence is LINTLIYAGI…DCRRYAYFPF (202 aa).

The protein belongs to the binding-protein-dependent transport system permease family. FbpB subfamily. In terms of assembly, the complex is composed of two ATP-binding proteins (FbpC), two transmembrane proteins (FbpB) and a solute-binding protein (FbpA).

The protein resides in the cell inner membrane. In terms of biological role, part of the ABC transporter complex FbpABC (TC 3.A.1.10.1) involved in Fe(3+) ions import. Probably responsible for the translocation of the substrate across the membrane. The polypeptide is Putative ferric transport system permease protein FbpB 1 (fbpB1) (Haemophilus influenzae (strain ATCC 51907 / DSM 11121 / KW20 / Rd)).